Consider the following 271-residue polypeptide: Very long chain fatty acid elongase 3 (271 aa).

Asn-6 carries an N-linked (GlcNAc...) asparagine glycan. The next 7 membrane-spanning stretches (helical) occupy residues 30-50 (FLEEYWVSSFLIVVVYLLLIV), 67-87 (PLILWSFFLAIFSILGTLRMW), 116-136 (FWSFLFLLSKVVELGDTAFII), 141-161 (PLIFVHWYHHSTVLLFTSFGY), 165-187 (VPSGGWFMTMNFGVHSVMYTYYT), 199-219 (LPMVITSLQILQMVLGTIFGI), and 236-256 (HFFWSFMLYGTYFILFAHFFH).

It belongs to the ELO family. ELOVL3 subfamily. As to quaternary structure, interacts with TECR. N-Glycosylated. In terms of tissue distribution, expressed in brown adipose tissue and liver. In the skin, strong expressed in the cells of the inner layer of the outer root sheath of the hair follicles and in the sebocytes of the sebaceous glands. Hardly detectable in the epidermis and not at all in fibroblasts.

It localises to the endoplasmic reticulum membrane. The enzyme catalyses a very-long-chain acyl-CoA + malonyl-CoA + H(+) = a very-long-chain 3-oxoacyl-CoA + CO2 + CoA. It carries out the reaction eicosanoyl-CoA + malonyl-CoA + H(+) = 3-oxodocosanoyl-CoA + CO2 + CoA. The catalysed reaction is hexadecanoyl-CoA + malonyl-CoA + H(+) = 3-oxooctadecanoyl-CoA + CO2 + CoA. It catalyses the reaction octadecanoyl-CoA + malonyl-CoA + H(+) = 3-oxoeicosanoyl-CoA + CO2 + CoA. The enzyme catalyses (9Z)-octadecenoyl-CoA + malonyl-CoA + H(+) = 3-oxo-(11Z)-eicosenoyl-CoA + CO2 + CoA. It carries out the reaction (9Z,12Z)-octadecadienoyl-CoA + malonyl-CoA + H(+) = (11Z,14Z)-3-oxoicosa-11,14-dienoyl-CoA + CO2 + CoA. The catalysed reaction is (9Z,12Z,15Z)-octadecatrienoyl-CoA + malonyl-CoA + H(+) = (11Z,14Z,17Z)-3-oxoeicosatrienoyl-CoA + CO2 + CoA. It catalyses the reaction docosanoyl-CoA + malonyl-CoA + H(+) = 3-oxotetracosanoyl-CoA + CO2 + CoA. The enzyme catalyses tetradecanoyl-CoA + malonyl-CoA + H(+) = 3-oxohexadecanoyl-CoA + CO2 + CoA. Its pathway is lipid metabolism; polyunsaturated fatty acid biosynthesis. Catalyzes the first and rate-limiting reaction of the four reactions that constitute the long-chain fatty acids elongation cycle. This endoplasmic reticulum-bound enzymatic process allows the addition of 2 carbons to the chain of long- and very long-chain fatty acids (VLCFAs) per cycle. Condensing enzyme that exhibits activity toward saturated and unsaturated acyl-CoA substrates with higher activity toward C18 acyl-CoAs, especially C18:0 acyl-CoAs. May participate in the production of saturated and monounsaturated VLCFAs of different chain lengths that are involved in multiple biological processes as precursors of membrane lipids and lipid mediators. Participates in the formation of certain VLCFA and triglycerides in certain cells of the hair follicles and the sebaceous glands, required for skin barrier function. Critical enzyme for lipid accumulation and metabolic activity in brown adipocytes during the early phase of the tissue recruitment. Plays a role in lipid storage and in resistance to diet-induced obesity. The polypeptide is Very long chain fatty acid elongase 3 (Mus musculus (Mouse)).